Reading from the N-terminus, the 809-residue chain is Lon protease (809 aa).

The 197-residue stretch at 20-216 (LPLLALRDVV…ELMNYLMNQS (197 aa)) folds into the Lon N-terminal domain. 369-376 (GPPGVGKT) contributes to the ATP binding site. Positions 606 to 787 (EAQVGRVNGL…DEILPLALTS (182 aa)) constitute a Lon proteolytic domain. Residues Ser-693 and Lys-736 contribute to the active site.

Belongs to the peptidase S16 family. Homohexamer. Organized in a ring with a central cavity.

It localises to the cytoplasm. It carries out the reaction Hydrolysis of proteins in presence of ATP.. Functionally, ATP-dependent serine protease that mediates the selective degradation of mutant and abnormal proteins as well as certain short-lived regulatory proteins. Required for cellular homeostasis and for survival from DNA damage and developmental changes induced by stress. Degrades polypeptides processively to yield small peptide fragments that are 5 to 10 amino acids long. Binds to DNA in a double-stranded, site-specific manner. The chain is Lon protease from Acinetobacter baumannii (strain AB307-0294).